Consider the following 58-residue polypeptide: Large ribosomal subunit protein bL32 (58 aa).

It belongs to the bacterial ribosomal protein bL32 family.

This Anaplasma phagocytophilum (strain HZ) protein is Large ribosomal subunit protein bL32.